A 499-amino-acid chain; its full sequence is Probable malate:quinone oxidoreductase 4 (499 aa).

Belongs to the MQO family. FAD serves as cofactor.

It carries out the reaction (S)-malate + a quinone = a quinol + oxaloacetate. Its pathway is carbohydrate metabolism; tricarboxylic acid cycle; oxaloacetate from (S)-malate (quinone route): step 1/1. The chain is Probable malate:quinone oxidoreductase 4 from Staphylococcus epidermidis (strain ATCC 12228 / FDA PCI 1200).